We begin with the raw amino-acid sequence, 89 residues long: Small ribosomal subunit protein uS15 (89 aa).

This sequence belongs to the universal ribosomal protein uS15 family. Part of the 30S ribosomal subunit. Forms a bridge to the 50S subunit in the 70S ribosome, contacting the 23S rRNA.

Its function is as follows. One of the primary rRNA binding proteins, it binds directly to 16S rRNA where it helps nucleate assembly of the platform of the 30S subunit by binding and bridging several RNA helices of the 16S rRNA. Forms an intersubunit bridge (bridge B4) with the 23S rRNA of the 50S subunit in the ribosome. This Treponema denticola (strain ATCC 35405 / DSM 14222 / CIP 103919 / JCM 8153 / KCTC 15104) protein is Small ribosomal subunit protein uS15.